Here is a 439-residue protein sequence, read N- to C-terminus: MSYFDINKVNYEGPKSNNAFSFKYYNPEEKLGNHSMSELLRFSVAYWHTFTADLSDPFGVGVAERDWDSLDEMEKAKARVEAIFEFMEKTRIDYFCFHDVDISPEGASLKESNENLDIIVELIKEKMDQTGKKLLWNTTNNFTHERFVHGAATSSNAEVFAYAAAKVKKSLEIAKKLGSENFVFWGGREGYESLLNTNMKLELDNLATFFKMAKSYADEIGYTGQFLIEPKPKEPTTHQYDTDVATAHAFLQKYDLDKDFKFNIEANHATLAGHTFQHELRYARDNNMLGSVDANQGHPLLGWDTDESTDVYDTTLAMYEILKNGGLAPGGLNFDAKPRRTSFKQEDLILTHIAGMDTFALGLRVAYKMIEDNFFENIMDEKYKSFNEGIGKKIVEGETSLKELEDYAFNINTINNTSDHLEVIKSQINQYILNINNKD.

Active-site residues include H98 and D101. 7 residues coordinate Mg(2+): E229, E265, H268, D293, D304, D306, and D335.

The protein belongs to the xylose isomerase family. In terms of assembly, homotetramer. Requires Mg(2+) as cofactor.

The protein localises to the cytoplasm. The enzyme catalyses alpha-D-xylose = alpha-D-xylulofuranose. Functionally, involved in D-xylose catabolism. The chain is Xylose isomerase (xylA) from Staphylococcus xylosus.